The primary structure comprises 777 residues: BRCA1-associated RING domain protein 1 (777 aa).

The segment at 1 to 32 (MPDNRQPRNRQPRIRSGNEPRSAPAMEPDGRG) is disordered. The segment at 26–119 (MEPDGRGAWA…KLRNLLHDNE (94 aa)) is interaction with BRCA1. Residues 50–87 (CSRCTNILREPVCLGGCEHIFCSNCVSDCIGTGCPVCY) form an RING-type zinc finger. Residues K160 and K170 each participate in a glycyl lysine isopeptide (Lys-Gly) (interchain with G-Cter in SUMO2) cross-link. A disordered region spans residues 167–211 (PAIKKDASAQQDSYEFVSPSPPADVSERAKKASARSGKKQKKKTL). S186 carries the post-translational modification Phosphoserine. A compositionally biased stretch (basic residues) spans 197 to 209 (KASARSGKKQKKK). The residue at position 299 (T299) is a Phosphothreonine. The tract at residues 356–404 (NIPLPECSSPPSCKRKVGGTSGRKNSNMSDEFISLSPGTPPSTLSSSSY) is disordered. Residues 389-404 (SLSPGTPPSTLSSSSY) are compositionally biased toward low complexity. S391 bears the Phosphoserine mark. T394 is subject to Phosphothreonine. A Glycyl lysine isopeptide (Lys-Gly) (interchain with G-Cter in SUMO2) cross-link involves residue K423. 3 ANK repeats span residues 427 to 459 (RGET…VKDH), 460 to 492 (AGWT…TTGY), and 493 to 525 (QNDS…AVNI). The stretch at 526–546 (FGLRPVDYTDDESMKSLLLLP) is one ANK 4; degenerate repeat. Residue K548 forms a Glycyl lysine isopeptide (Lys-Gly) (interchain with G-Cter in SUMO2) linkage. The flexible linker stretch occupies residues 554–558 (ASHCS). BRCT domains follow at residues 560–653 (MNTG…KYEI) and 667–777 (LLPK…PLDS).

As to quaternary structure, homo- and heterodimer. Heterodimer (RING-type zinc finger) with BRCA1. Heterodimer (via ANK repeats and BRCT domains) with CSTF1/CSTF-50. Component of the BRCA1-A complex, at least composed of the BRCA1, BARD1, UIMC1/RAP80, ABRAXAS1, BRCC3/BRCC36, BABAM2 and BABAM1/NBA1. Interacts with UBXN1. Processed during apoptosis. The homodimer is more susceptible to proteolytic cleavage than the BARD1/BRCA1 heterodimer.

The protein resides in the nucleus. It carries out the reaction S-ubiquitinyl-[E2 ubiquitin-conjugating enzyme]-L-cysteine + [acceptor protein]-L-lysine = [E2 ubiquitin-conjugating enzyme]-L-cysteine + N(6)-ubiquitinyl-[acceptor protein]-L-lysine.. It functions in the pathway protein modification; protein ubiquitination. E3 ubiquitin-protein ligase. The BRCA1-BARD1 heterodimer specifically mediates the formation of 'Lys-6'-linked polyubiquitin chains and coordinates a diverse range of cellular pathways such as DNA damage repair, ubiquitination and transcriptional regulation to maintain genomic stability. Plays a central role in the control of the cell cycle in response to DNA damage. Acts by mediating ubiquitin E3 ligase activity that is required for its tumor suppressor function. Also forms a heterodimer with CSTF1/CSTF-50 to modulate mRNA processing and RNAP II stability by inhibiting pre-mRNA 3' cleavage. The protein is BRCA1-associated RING domain protein 1 (BARD1) of Homo sapiens (Human).